The primary structure comprises 85 residues: 4-hydroxyphenylacetate decarboxylase small subunit (85 aa).

Positions 4, 7, 20, 34, 43, 46, 60, and 78 each coordinate [4Fe-4S] cluster.

The protein belongs to the HPA decarboxylase small subunit family. As to quaternary structure, heterooctamer consisting of 4 large (HpdB) subunits and 4 small (HpdC) subunits, arranged as a tetramer of heterodimers. [4Fe-4S] cluster serves as cofactor.

The enzyme catalyses 4-hydroxyphenylacetate + H(+) = 4-methylphenol + CO2. It carries out the reaction 3,4-dihydroxyphenylacetate + H(+) = 4-methylcatechol + CO2. Its function is as follows. Component of the HPA decarboxylase that decarboxylates phenylacetates with a hydroxyl group in the p-position. Active toward 4-hydroxyphenylacetate and 3,4-dihydroxyphenylacetate, forming 4-methylphenol and 4-methylcatechol, respectively. Is likely involved in the catabolism of aromatic amino acids such as tyrosine fermentation. 4-methylphenol (p-cresol) formation provides metabolic toxicity, which allows an active suppression of other microbes and may provide growth advantages for the producers in highly competitive environments. The small subunit is essential for enzymatic activity of HPA decarboxylase, and also seems to be involved in the regulation of the enzyme oligomeric state and catalytic activity. The sequence is that of 4-hydroxyphenylacetate decarboxylase small subunit from Clostridioides difficile (strain CD196) (Peptoclostridium difficile).